The primary structure comprises 340 residues: Eukaryotic translation initiation factor 3 subunit I (340 aa).

6 WD repeats span residues 8–47, 50–89, 91–135, 150–189, 194–233, and 291–330; these read GHER…RLGT, GHQG…CVKV, DFPT…GEGN, CEQS…QLQN, EFDY…VMKT, and GHFG…FDFM.

The protein belongs to the eIF-3 subunit I family. Component of the eukaryotic translation initiation factor 3 (eIF-3) complex.

It localises to the cytoplasm. Functionally, component of the eukaryotic translation initiation factor 3 (eIF-3) complex, which is involved in protein synthesis of a specialized repertoire of mRNAs and, together with other initiation factors, stimulates binding of mRNA and methionyl-tRNAi to the 40S ribosome. The eIF-3 complex specifically targets and initiates translation of a subset of mRNAs involved in cell proliferation. The protein is Eukaryotic translation initiation factor 3 subunit I of Coccidioides immitis (strain RS) (Valley fever fungus).